Here is a 2288-residue protein sequence, read N- to C-terminus: Protein Ycf2 (2288 aa).

1629–1636 contacts ATP; that stretch reads GSIGTGRS.

It belongs to the Ycf2 family.

The protein localises to the plastid. It localises to the chloroplast stroma. In terms of biological role, probable ATPase of unknown function. Its presence in a non-photosynthetic plant (Epifagus virginiana) and experiments in tobacco indicate that it has an essential function which is probably not related to photosynthesis. This chain is Protein Ycf2, found in Phaseolus vulgaris (Kidney bean).